A 195-amino-acid polypeptide reads, in one-letter code: Iron-sulfur flavoprotein AF_1519 (195 aa).

4 residues coordinate [4Fe-4S] cluster: Cys-45, Cys-48, Cys-51, and Cys-57.

The protein belongs to the SsuE family. Isf subfamily. As to quaternary structure, homodimer. FMN is required as a cofactor. [4Fe-4S] cluster serves as cofactor.

In terms of biological role, redox-active protein probably involved in electron transport. This chain is Iron-sulfur flavoprotein AF_1519, found in Archaeoglobus fulgidus (strain ATCC 49558 / DSM 4304 / JCM 9628 / NBRC 100126 / VC-16).